A 105-amino-acid chain; its full sequence is U2-lycotoxin-Ls1a (105 aa).

Positions 1–17 are cleaved as a signal peptide; the sequence is MIKYVLISALLVVAVYS. Residues 18–41 constitute a propeptide that is removed on maturation; sequence FTIEDNEDALLEEAEDELDTEEER. Intrachain disulfides connect Cys-51–Cys-67, Cys-58–Cys-97, Cys-60–Cys-83, and Cys-69–Cys-81.

It belongs to the neurotoxin 04 (omega-agtx) family. 01 (type I omega-agtx) subfamily. In terms of tissue distribution, expressed by the venom gland.

It is found in the secreted. Insecticidal to house crickets. It induces an excitatory slow-onset impact that leads to irreversible spastic paralysis. It also modifies human voltage-gated potassium channel Kv1.5/KCNA5. Most likely, it binds to the voltage-sensing domain of the channel, suggesting it does not block the pore but prevents its opening at physiological membrane potentials. The recombinant peptide binds to the channel in an irreversible manner and slows down the hKv1.5 current activation kinetics. It is not toxic to mice, when intracranially injected (at 0.5 ug/g mouse). In Lycosa singoriensis (Wolf spider), this protein is U2-lycotoxin-Ls1a.